The sequence spans 240 residues: Ribosomal RNA large subunit methyltransferase E (240 aa).

The segment covering 1–20 (MSKAGGNKGGSRTGGRGGAG) has biased composition (gly residues). Positions 1–33 (MSKAGGNKGGSRTGGRGGAGSSNLHVRVKKKAG) are disordered. S-adenosyl-L-methionine is bound by residues glycine 92, tryptophan 94, aspartate 115, aspartate 131, and aspartate 155. Lysine 195 functions as the Proton acceptor in the catalytic mechanism.

It belongs to the class I-like SAM-binding methyltransferase superfamily. RNA methyltransferase RlmE family.

The protein resides in the cytoplasm. It carries out the reaction uridine(2552) in 23S rRNA + S-adenosyl-L-methionine = 2'-O-methyluridine(2552) in 23S rRNA + S-adenosyl-L-homocysteine + H(+). Its function is as follows. Specifically methylates the uridine in position 2552 of 23S rRNA at the 2'-O position of the ribose in the fully assembled 50S ribosomal subunit. This chain is Ribosomal RNA large subunit methyltransferase E, found in Brucella abortus (strain S19).